A 462-amino-acid polypeptide reads, in one-letter code: ATP synthase subunit beta (462 aa).

150–157 provides a ligand contact to ATP; the sequence is GGAGVGKT.

It belongs to the ATPase alpha/beta chains family. In terms of assembly, F-type ATPases have 2 components, CF(1) - the catalytic core - and CF(0) - the membrane proton channel. CF(1) has five subunits: alpha(3), beta(3), gamma(1), delta(1), epsilon(1). CF(0) has three main subunits: a(1), b(2) and c(9-12). The alpha and beta chains form an alternating ring which encloses part of the gamma chain. CF(1) is attached to CF(0) by a central stalk formed by the gamma and epsilon chains, while a peripheral stalk is formed by the delta and b chains. In this bacterium the a and b subunits are transcribed but do not seem to be translated, thus the ATP synthase consists of the alpha, beta, gamma, delta, epsilon and c subunits.

It localises to the cell membrane. It catalyses the reaction ATP + H2O + 4 H(+)(in) = ADP + phosphate + 5 H(+)(out). Produces ATP from ADP in the presence of a proton gradient across the membrane. The catalytic sites are hosted primarily by the beta subunits. This Moorella thermoacetica (strain ATCC 39073 / JCM 9320) protein is ATP synthase subunit beta.